Consider the following 76-residue polypeptide: Small ribosomal subunit protein uS17 (76 aa).

It belongs to the universal ribosomal protein uS17 family. In terms of assembly, part of the 30S ribosomal subunit.

Functionally, one of the primary rRNA binding proteins, it binds specifically to the 5'-end of 16S ribosomal RNA. The polypeptide is Small ribosomal subunit protein uS17 (Anaplasma phagocytophilum (strain HZ)).